The primary structure comprises 85 residues: MTNDANIRLECLKPAERWAQPSGEEVREVLRLAGLTGGKAAKVLGLGPKGDRTIRRWVGEDTPIPYAAWALLCDYAGLGLIWKEV.

The H-T-H motif DNA-binding region spans 28–47 (EVLRLAGLTGGKAAKVLGLG).

Its function is as follows. Acts with KorA as corepressor in the control of the kilC and kilE operons. The chain is Transcriptional repressor protein KorC (korC) from Escherichia coli.